We begin with the raw amino-acid sequence, 439 residues long: UPF0489 protein C5orf22 homolog (439 aa).

The disordered stretch occupies residues 163–219 (TTKLENGQSGAKIPKAAQTQDDMQSKADTPCTSSSQPPDGSAASGNISETAKKKADD). Polar residues predominate over residues 179–211 (AQTQDDMQSKADTPCTSSSQPPDGSAASGNISE).

Belongs to the UPF0489 family.

This chain is UPF0489 protein C5orf22 homolog, found in Danio rerio (Zebrafish).